The sequence spans 169 residues: Allophycocyanin subunit beta-18 (169 aa).

N4-methylasparagine is present on Asn-72. A (2R,3E)-phycocyanobilin-binding site is contributed by Cys-82.

Belongs to the phycobiliprotein family. As to quaternary structure, heterodimer of an alpha and a beta chain. Post-translationally, contains one covalently linked bilin chromophore.

Its subcellular location is the plastid. The protein resides in the chloroplast thylakoid membrane. Functionally, light-harvesting photosynthetic bile pigment-protein from the phycobiliprotein complex. Allophycocyanin has a maximum absorption at approximately 650 nanometers. The sequence is that of Allophycocyanin subunit beta-18 (apcF) from Porphyra purpurea (Red seaweed).